A 398-amino-acid polypeptide reads, in one-letter code: Beta-1,4-galactosyltransferase 1 (398 aa).

At 1–24 the chain is on the cytoplasmic side; that stretch reads MRLREPLLSGSAAMPGASLQRACR. A helical; Signal-anchor for type II membrane protein membrane pass occupies residues 25–44; it reads LLVAVCALHLGVTLVYYLAG. Residues 45–398 are Lumenal-facing; that stretch reads RDLSRLPQLV…QITVDIGTPS (354 aa). Residues 61–76 are compositionally biased toward polar residues; that stretch reads QGGSNSAAAIGQSSGE. The interval 61-117 is disordered; sequence QGGSNSAAAIGQSSGELRTGGARPPPPLGASSQPRPGGDSSPVVDSGPGPASNLTSV. Asn113 is a glycosylation site (N-linked (GlcNAc...) asparagine). Cys130 and Cys172 form a disulfide bridge. UDP-alpha-D-galactose contacts are provided by residues 183–187, 222–224, 249–250, and Trp310; these read PFRNR, FNR, and VD. An intrachain disulfide couples Cys243 to Cys262. Asp250 provides a ligand contact to Mn(2+). Position 312–315 (312–315) interacts with N-acetyl-D-glucosamine; that stretch reads GEDD. His343 lines the Mn(2+) pocket. 343–346 lines the UDP-alpha-D-galactose pocket; that stretch reads HSRD. Residue Arg355 participates in N-acetyl-D-glucosamine binding.

It belongs to the glycosyltransferase 7 family. As to quaternary structure, homodimer; and heterodimer with alpha-lactalbumin to form lactose synthase. Interacts (via N-terminal cytoplasmic domain) with UBE2Q1 (via N-terminus); the interaction is direct. It depends on Mn(2+) as a cofactor. Post-translationally, the soluble form derives from the membrane forms by proteolytic processing. In terms of tissue distribution, ubiquitously expressed, but at very low levels in fetal and adult brain.

The protein localises to the golgi apparatus. The protein resides in the golgi stack membrane. Its subcellular location is the cell membrane. It localises to the cell surface. It is found in the cell projection. The protein localises to the filopodium. The protein resides in the secreted. The enzyme catalyses D-glucose + UDP-alpha-D-galactose = lactose + UDP + H(+). It catalyses the reaction an N-acetyl-beta-D-glucosaminyl derivative + UDP-alpha-D-galactose = a beta-D-galactosyl-(1-&gt;4)-N-acetyl-beta-D-glucosaminyl derivative + UDP + H(+). The catalysed reaction is N-acetyl-D-glucosamine + UDP-alpha-D-galactose = beta-D-galactosyl-(1-&gt;4)-N-acetyl-D-glucosamine + UDP + H(+). It carries out the reaction a beta-D-GlcNAc-(1-&gt;3)-beta-D-Gal-(1-&gt;4)-beta-D-Glc-(1&lt;-&gt;1)-Cer(d18:1(4E)) + UDP-alpha-D-galactose = a neolactoside nLc4Cer(d18:1(4E)) + UDP + H(+). The enzyme catalyses a beta-D-glucosylceramide + UDP-alpha-D-galactose = a beta-D-galactosyl-(1-&gt;4)-beta-D-glucosyl-(1&lt;-&gt;1)-ceramide + UDP + H(+). It catalyses the reaction a neolactoside IV(3)-beta-GlcNAc-nLc4Cer + UDP-alpha-D-galactose = a neolactoside nLc6Cer + UDP + H(+). Its pathway is protein modification; protein glycosylation. In terms of biological role, the Golgi complex form catalyzes the production of lactose in the lactating mammary gland and could also be responsible for the synthesis of complex-type N-linked oligosaccharides in many glycoproteins as well as the carbohydrate moieties of glycolipids. The cell surface form functions as a recognition molecule during a variety of cell to cell and cell to matrix interactions, as those occurring during development and egg fertilization, by binding to specific oligosaccharide ligands on opposing cells or in the extracellular matrix. This Homo sapiens (Human) protein is Beta-1,4-galactosyltransferase 1.